Reading from the N-terminus, the 637-residue chain is Chaperone protein DnaK (637 aa).

Thr-198 carries the phosphothreonine; by autocatalysis modification. Residues 601–615 are compositionally biased toward low complexity; sequence AQQKAQAEQAGADAG. A disordered region spans residues 601–637; it reads AQQKAQAEQAGADAGEQPKQDDDVVDAEFEEVKEDKK. Over residues 623–637 the composition is skewed to acidic residues; the sequence is DVVDAEFEEVKEDKK.

Belongs to the heat shock protein 70 family.

Its function is as follows. Acts as a chaperone. The polypeptide is Chaperone protein DnaK (Vibrio atlanticus (strain LGP32) (Vibrio splendidus (strain Mel32))).